The primary structure comprises 298 residues: GTPase Era (298 aa).

The Era-type G domain occupies 4-171 (KSGFVSVIGR…LKEALDYIPE (168 aa)). The segment at 12-19 (GRPNVGKS) is G1. 12 to 19 (GRPNVGKS) provides a ligand contact to GTP. The tract at residues 38-42 (QTTRN) is G2. Positions 59–62 (DTPG) are G3. GTP contacts are provided by residues 59-63 (DTPGI) and 121-124 (NKVD). Residues 121–124 (NKVD) form a G4 region. Positions 150 to 152 (ISA) are G5. The region spanning 202–279 (LDDEVPHGVG…FLELWVKVKP (78 aa)) is the KH type-2 domain.

It belongs to the TRAFAC class TrmE-Era-EngA-EngB-Septin-like GTPase superfamily. Era GTPase family. Monomer.

It is found in the cytoplasm. Its subcellular location is the cell membrane. In terms of biological role, an essential GTPase that binds both GDP and GTP, with rapid nucleotide exchange. Plays a role in 16S rRNA processing and 30S ribosomal subunit biogenesis and possibly also in cell cycle regulation and energy metabolism. The polypeptide is GTPase Era (Ruminiclostridium cellulolyticum (strain ATCC 35319 / DSM 5812 / JCM 6584 / H10) (Clostridium cellulolyticum)).